A 423-amino-acid chain; its full sequence is GTPase HflX (423 aa).

Residues P202–K366 form the Hflx-type G domain. Residues G208 to S215, F233 to D237, D255 to G258, N321 to D324, and S344 to K346 contribute to the GTP site. Residues S215 and T235 each contribute to the Mg(2+) site.

The protein belongs to the TRAFAC class OBG-HflX-like GTPase superfamily. HflX GTPase family. As to quaternary structure, monomer. Associates with the 50S ribosomal subunit. Mg(2+) is required as a cofactor.

The protein localises to the cytoplasm. Its function is as follows. GTPase that associates with the 50S ribosomal subunit and may have a role during protein synthesis or ribosome biogenesis. The sequence is that of GTPase HflX from Lacrimispora saccharolytica (strain ATCC 35040 / DSM 2544 / NRCC 2533 / WM1) (Clostridium saccharolyticum).